Reading from the N-terminus, the 821-residue chain is Zinc finger protein 41 (821 aa).

The interval 1–55 (MAANGDSPPWSPALAAEGRGSSCEVRRERTPEARIHSVKRYPDLSPGPKGRSSAD) is disordered. A compositionally biased stretch (basic and acidic residues) spans 24–35 (EVRRERTPEARI). A KRAB domain is found at 69 to 140 (VSFEDVTVDF…EGEAPHQSCS (72 aa)). A Glycyl lysine isopeptide (Lys-Gly) (interchain with G-Cter in SUMO2) cross-link involves residue K120. A C2H2-type 1 zinc finger spans residues 313 to 335 (YVCTECVMGFTQKSHLFEHQRIH). The C2H2-type 2; degenerate zinc-finger motif lies at 341–364 (RECDKSNKVFPQKPQVDVHPSVYT). 10 C2H2-type zinc fingers span residues 369 to 391 (YLCT…QKIH), 397 to 419 (YKCS…LRIH), 425 to 447 (YECS…QKTH), 453 to 475 (YECN…QRIH), 481 to 503 (YVCA…QRIH), 509 to 531 (YECS…QRIH), 537 to 559 (YICT…QKTH), 565 to 587 (YMCA…QKTH), 593 to 615 (YKCN…QKSH), and 621 to 643 (YECK…QRIH). K647 participates in a covalent cross-link: Glycyl lysine isopeptide (Lys-Gly) (interchain with G-Cter in SUMO2). 6 C2H2-type zinc fingers span residues 649 to 671 (YVCP…HRIH), 677 to 699 (YECS…QKIH), 705 to 727 (NICA…QKIH), 733 to 755 (YECG…QKSH), 761 to 783 (YECS…QIIH), and 789 to 811 (YACT…QKMH).

This sequence belongs to the krueppel C2H2-type zinc-finger protein family. In terms of tissue distribution, expressed in the heart, brain, placenta, lung, liver, skeletal muscle, kidney and pancreas.

It is found in the nucleus. Functionally, may be involved in transcriptional regulation. The sequence is that of Zinc finger protein 41 (ZNF41) from Homo sapiens (Human).